Here is a 218-residue protein sequence, read N- to C-terminus: Riboflavin kinase (218 aa).

A disordered region spans residues 1-27 (MRPDGPRDPVAGPDSGPEPPYPVRLSG). Mg(2+)-binding residues include Thr44 and Asn46. Residue Glu120 is the Nucleophile of the active site.

It belongs to the flavokinase family. Requires Zn(2+) as cofactor. The cofactor is Mg(2+).

It catalyses the reaction riboflavin + ATP = FMN + ADP + H(+). It functions in the pathway cofactor biosynthesis; FMN biosynthesis; FMN from riboflavin (ATP route): step 1/1. In terms of biological role, catalyzes the phosphorylation of riboflavin (vitamin B2) to form flavin mononucleotide (FMN) coenzyme. This chain is Riboflavin kinase (fmn1), found in Neosartorya fischeri (strain ATCC 1020 / DSM 3700 / CBS 544.65 / FGSC A1164 / JCM 1740 / NRRL 181 / WB 181) (Aspergillus fischerianus).